A 381-amino-acid chain; its full sequence is Erythronate-4-phosphate dehydrogenase (381 aa).

Residues Ser-45 and Thr-67 each coordinate substrate. Residues Asp-148, 207–209 (ASR), and Asp-233 contribute to the NAD(+) site. Arg-209 is a catalytic residue. Residue Glu-238 is part of the active site. His-255 acts as the Proton donor in catalysis. An NAD(+)-binding site is contributed by Gly-258.

Belongs to the D-isomer specific 2-hydroxyacid dehydrogenase family. PdxB subfamily. Homodimer.

The protein resides in the cytoplasm. The catalysed reaction is 4-phospho-D-erythronate + NAD(+) = (R)-3-hydroxy-2-oxo-4-phosphooxybutanoate + NADH + H(+). The protein operates within cofactor biosynthesis; pyridoxine 5'-phosphate biosynthesis; pyridoxine 5'-phosphate from D-erythrose 4-phosphate: step 2/5. Its function is as follows. Catalyzes the oxidation of erythronate-4-phosphate to 3-hydroxy-2-oxo-4-phosphonooxybutanoate. This Idiomarina loihiensis (strain ATCC BAA-735 / DSM 15497 / L2-TR) protein is Erythronate-4-phosphate dehydrogenase.